A 437-amino-acid chain; its full sequence is uncharacterized protein (437 aa).

The segment covering 63 to 87 (PSSANVSFQNSDDNLSTSRGRSASP) has biased composition (polar residues). Disordered regions lie at residues 63-97 (PSSA…SNFP), 112-147 (VKKD…KKET), and 346-437 (PKNA…YSIW). Positions 399–409 (EALSPSKSNPD) are enriched in polar residues. The segment covering 425–437 (KKPSSSSSNYSIW) has biased composition (low complexity).

This is an uncharacterized protein from Caenorhabditis elegans.